Consider the following 188-residue polypeptide: dCTP deaminase (188 aa).

Residues 111–116 (KSTYAR), 135–137 (TLE), Gln156, Tyr170, and Gln180 each bind dCTP. Glu137 functions as the Proton donor/acceptor in the catalytic mechanism.

This sequence belongs to the dCTP deaminase family. In terms of assembly, homotrimer.

The enzyme catalyses dCTP + H2O + H(+) = dUTP + NH4(+). It functions in the pathway pyrimidine metabolism; dUMP biosynthesis; dUMP from dCTP (dUTP route): step 1/2. Its function is as follows. Catalyzes the deamination of dCTP to dUTP. In Janthinobacterium sp. (strain Marseille) (Minibacterium massiliensis), this protein is dCTP deaminase.